The following is a 178-amino-acid chain: Nucleoside triphosphate/diphosphate phosphatase (178 aa).

Residue R23 is the Proton donor of the active site. Residues N87, D103, D105, D107, D120, and E123 each contribute to the Mg(2+) site.

Belongs to the Ntdp family. The cofactor is Mg(2+).

It catalyses the reaction a ribonucleoside 5'-triphosphate + H2O = a ribonucleoside 5'-diphosphate + phosphate + H(+). The catalysed reaction is a ribonucleoside 5'-diphosphate + H2O = a ribonucleoside 5'-phosphate + phosphate + H(+). Its function is as follows. Has nucleoside phosphatase activity towards nucleoside triphosphates and nucleoside diphosphates. This chain is Nucleoside triphosphate/diphosphate phosphatase, found in Latilactobacillus sakei subsp. sakei (strain 23K) (Lactobacillus sakei subsp. sakei).